The chain runs to 61 residues: Small ribosomal subunit protein uS14 (61 aa).

Residues C24, C27, C40, and C43 each contribute to the Zn(2+) site.

Belongs to the universal ribosomal protein uS14 family. Zinc-binding uS14 subfamily. As to quaternary structure, part of the 30S ribosomal subunit. Contacts proteins S3 and S10. Zn(2+) serves as cofactor.

Functionally, binds 16S rRNA, required for the assembly of 30S particles and may also be responsible for determining the conformation of the 16S rRNA at the A site. This chain is Small ribosomal subunit protein uS14, found in Mycoplasmoides gallisepticum (strain R(low / passage 15 / clone 2)) (Mycoplasma gallisepticum).